We begin with the raw amino-acid sequence, 336 residues long: MALKLGVIGTGAIGQDHIRRCSKTLVGSQVVAVTDINLEQAAKVVRELDIGAEVYADGHALIAAPDVEAVLVCSWGPSHEEYVLAAIAAGKPVFCEKPLAVTAEGCRHIVEAEIASGRRLVQVGFMRPYDQGYRALKSVIDSGRIGEPLMLHCAHRNPRVGENYKTDMAITDTLIHELNVLRWLLNDDYVSVQVVFPRKTSKALAHMKDPQIVMLETARGTRIDVEVFVNCQYGYDIQCEVVGESGIAKLPEPSQVQLRSEAKLSNAILMDWKDRFIAAYDVELQDFIDGVNAGTIYGPSAWDGYAAAVAADACVQAQNSGAVVPIALEMRPAFYD.

It belongs to the Gfo/Idh/MocA family. As to quaternary structure, homotetramer.

It carries out the reaction myo-inositol + NAD(+) = scyllo-inosose + NADH + H(+). In terms of biological role, involved in the oxidation of myo-inositol (MI) to 2-keto-myo-inositol (2KMI or 2-inosose). The chain is Inositol 2-dehydrogenase from Pseudomonas savastanoi pv. phaseolicola (strain 1448A / Race 6) (Pseudomonas syringae pv. phaseolicola (strain 1448A / Race 6)).